The primary structure comprises 149 residues: Large ribosomal subunit protein uL13 (149 aa).

This sequence belongs to the universal ribosomal protein uL13 family. In terms of assembly, part of the 50S ribosomal subunit.

In terms of biological role, this protein is one of the early assembly proteins of the 50S ribosomal subunit, although it is not seen to bind rRNA by itself. It is important during the early stages of 50S assembly. In Chlorobium phaeovibrioides (strain DSM 265 / 1930) (Prosthecochloris vibrioformis (strain DSM 265)), this protein is Large ribosomal subunit protein uL13.